The chain runs to 1063 residues: Exportin-T (1063 aa).

It belongs to the exportin family.

It is found in the nucleus. The protein resides in the cytoplasm. Functionally, tRNA nucleus export receptor which facilitates tRNA translocation across the nuclear pore complex. Involved in pre-tRNA splicing, probably by affecting the interaction of pre-tRNA with splicing endonuclease. The sequence is that of Exportin-T (LOS1) from Kluyveromyces lactis (strain ATCC 8585 / CBS 2359 / DSM 70799 / NBRC 1267 / NRRL Y-1140 / WM37) (Yeast).